Reading from the N-terminus, the 182-residue chain is MAKIGLFFGSDTGTTRKIAKQIKDMFDDEVMAKPLNVNRADVADFMAYDFLILGTPTLGDGQLPGLSANAASESWEEFLPRIADQDFSGKTIALFGLGDQVTYPLEFVNALFFLHEFFSDRGAKLVGRWPAKGYGFEDSLAVVEGEFLGLALDQDNQAALTPERLKGWLSLIAADFGLVLPA.

One can recognise a Flavodoxin-like domain in the interval 4–173 (IGLFFGSDTG…RLKGWLSLIA (170 aa)).

Belongs to the flavodoxin family. FMN is required as a cofactor.

Its function is as follows. Low-potential electron donor to a number of redox enzymes. NifF is the electron donor to nitrogenase. The sequence is that of Flavodoxin (nifF) from Rhodobacter capsulatus (strain ATCC BAA-309 / NBRC 16581 / SB1003).